An 88-amino-acid polypeptide reads, in one-letter code: U1-hexatoxin-Iw1c (88 aa).

A signal peptide spans 1–17; sequence LKFVVLICLVIMASTSA. At glutamine 18 the chain carries Pyrrolidone carboxylic acid. 5 disulfides stabilise this stretch: cysteine 20/cysteine 31, cysteine 25/cysteine 39, cysteine 30/cysteine 65, cysteine 49/cysteine 73, and cysteine 67/cysteine 80. Positions 86–88 are excised as a propeptide; it reads RSE.

The protein belongs to the MIT-like AcTx family. Expressed by the venom gland.

Its subcellular location is the secreted. This is U1-hexatoxin-Iw1c from Illawarra wisharti (Illawarra funnel-web spider).